The following is a 448-amino-acid chain: Ribonuclease J (448 aa).

Zn(2+)-binding residues include H81, H83, D85, H86, H151, and D173. 383 to 387 (HVSGH) contacts substrate. H409 contacts Zn(2+).

This sequence belongs to the metallo-beta-lactamase superfamily. RNA-metabolizing metallo-beta-lactamase-like family. Archaeal RNase J subfamily. Forms homodimers on heating to 60 degrees Celsius which may be the active form. Requires Zn(2+) as cofactor.

The protein localises to the cytoplasm. Inhibited by imidazole. A 5'-3' exoribonuclease with a strong reference for 5'-monophosphorylated RNA and no endoribonuclease activty. Also has robust 5'-'3 nuclease activity on single-stranded DNA (exodeoxyribonuclease, exoDNase). May be involved in RNA degradation. This Methanocaldococcus jannaschii (strain ATCC 43067 / DSM 2661 / JAL-1 / JCM 10045 / NBRC 100440) (Methanococcus jannaschii) protein is Ribonuclease J.